The following is a 503-amino-acid chain: Probable cytosol aminopeptidase (503 aa).

2 residues coordinate Mn(2+): Lys-270 and Asp-275. Lys-282 is a catalytic residue. Residues Asp-293, Asp-352, and Glu-354 each coordinate Mn(2+). The active site involves Arg-356.

Belongs to the peptidase M17 family. It depends on Mn(2+) as a cofactor.

It localises to the cytoplasm. The catalysed reaction is Release of an N-terminal amino acid, Xaa-|-Yaa-, in which Xaa is preferably Leu, but may be other amino acids including Pro although not Arg or Lys, and Yaa may be Pro. Amino acid amides and methyl esters are also readily hydrolyzed, but rates on arylamides are exceedingly low.. The enzyme catalyses Release of an N-terminal amino acid, preferentially leucine, but not glutamic or aspartic acids.. In terms of biological role, presumably involved in the processing and regular turnover of intracellular proteins. Catalyzes the removal of unsubstituted N-terminal amino acids from various peptides. In Enterobacter sp. (strain 638), this protein is Probable cytosol aminopeptidase.